The primary structure comprises 291 residues: Probable 2-(5''-triphosphoribosyl)-3'-dephosphocoenzyme-A synthase (291 aa).

Belongs to the CitG/MdcB family.

It carries out the reaction 3'-dephospho-CoA + ATP = 2'-(5''-triphospho-alpha-D-ribosyl)-3'-dephospho-CoA + adenine. In terms of biological role, involved in the formation of 2-(5''-phosphoribosyl)-3'-dephosphocoenzyme-A, the prosthetic group of the acyl-carrier protein of the malonate decarboxylase. In Pseudomonas syringae pv. tomato (strain ATCC BAA-871 / DC3000), this protein is Probable 2-(5''-triphosphoribosyl)-3'-dephosphocoenzyme-A synthase.